The following is a 369-amino-acid chain: Cytoplasmic tRNA 2-thiolation protein 1 (369 aa).

The protein belongs to the TtcA family. CTU1/NCS6/ATPBD3 subfamily.

The protein resides in the cytoplasm. It participates in tRNA modification; 5-methoxycarbonylmethyl-2-thiouridine-tRNA biosynthesis. In terms of biological role, plays a central role in 2-thiolation of mcm(5)S(2)U at tRNA wobble positions of tRNA(Lys), tRNA(Glu) and tRNA(Gln). Directly binds tRNAs and probably acts by catalyzing adenylation of tRNAs, an intermediate required for 2-thiolation. It is unclear whether it acts as a sulfurtransferase that transfers sulfur from thiocarboxylated URM1 onto the uridine of tRNAs at wobble position. Prior mcm(5) tRNA modification by the elongator complex is required for 2-thiolation. May also be involved in protein urmylation. The protein is Cytoplasmic tRNA 2-thiolation protein 1 of Meyerozyma guilliermondii (strain ATCC 6260 / CBS 566 / DSM 6381 / JCM 1539 / NBRC 10279 / NRRL Y-324) (Yeast).